The chain runs to 210 residues: Acyl-homoserine-lactone synthase (210 aa).

Belongs to the autoinducer synthase family.

The enzyme catalyses a fatty acyl-[ACP] + S-adenosyl-L-methionine = an N-acyl-L-homoserine lactone + S-methyl-5'-thioadenosine + holo-[ACP] + H(+). Required for the synthesis of OHHL (N-(3-oxohexanoyl)-L-homoserine lactone), an autoinducer molecule which binds to EsaR. OHHL is necessary for biosynthesis of EPS virulence factor (extracellular heteropolysaccharide) which plays a role in the development of Stewart's wilt on sweet corn. This chain is Acyl-homoserine-lactone synthase (esaI), found in Pantoea stewartii subsp. stewartii (Erwinia stewartii).